Here is a 310-residue protein sequence, read N- to C-terminus: 4-hydroxyproline 2-epimerase (310 aa).

The Proton acceptor role is filled by cysteine 88. Residues 89–90 (GH), histidine 208, and aspartate 232 contribute to the substrate site. Cysteine 236 acts as the Proton donor in catalysis. 237-238 (GT) serves as a coordination point for substrate.

This sequence belongs to the proline racemase family.

The catalysed reaction is trans-4-hydroxy-L-proline = cis-4-hydroxy-D-proline. Functionally, catalyzes the epimerization of trans-4-hydroxy-L-proline (t4LHyp) to cis-4-hydroxy-D-proline (c4DHyp). Is likely involved in a degradation pathway that converts t4LHyp to alpha-ketoglutarate. Displays no proline racemase activity. In Acinetobacter baumannii (strain ATCC 17978 / DSM 105126 / CIP 53.77 / LMG 1025 / NCDC KC755 / 5377), this protein is 4-hydroxyproline 2-epimerase.